The sequence spans 194 residues: Thiol:disulfide interchange protein CycY (194 aa).

The signal sequence occupies residues 1 to 37; sequence MSEQSTSANPQRRTFLMVLPLIAFIGLALLFWFRLGS. The Thioredoxin domain occupies 46 to 190; the sequence is ALIGRPAPQT…LRSVLLPQME (145 aa). A disulfide bridge connects residues Cys-92 and Cys-95.

Belongs to the thioredoxin family. DsbE subfamily.

The protein localises to the periplasm. Required for disulfide bond formation in some periplasmic proteins. Also acts as a disulfide oxidoreductase in cytochromes c biogenesis. The cysteines of apocytochromes c must be in the reduced state for covalent linkage between the two moieties to occur. This is Thiol:disulfide interchange protein CycY (cycY) from Bradyrhizobium diazoefficiens (strain JCM 10833 / BCRC 13528 / IAM 13628 / NBRC 14792 / USDA 110).